Here is a 278-residue protein sequence, read N- to C-terminus: Type II restriction enzyme AgeI (278 aa).

The protein belongs to the BsaWI type II restriction endonuclease family.

It carries out the reaction Endonucleolytic cleavage of DNA to give specific double-stranded fragments with terminal 5'-phosphates.. A P subtype restriction enzyme that recognizes the double-stranded sequence 5'-ACCGGT-3' and cleaves after A-1. This is Type II restriction enzyme AgeI (ageIR) from Thalassovita gelatinovora (Thalassobius gelatinovorus).